The following is a 299-amino-acid chain: Coenzyme PQQ synthesis protein B (299 aa).

It belongs to the PqqB family.

The protein operates within cofactor biosynthesis; pyrroloquinoline quinone biosynthesis. May be involved in the transport of PQQ or its precursor to the periplasm. The polypeptide is Coenzyme PQQ synthesis protein B (Methylorubrum extorquens (strain PA1) (Methylobacterium extorquens)).